The following is an 86-amino-acid chain: Protein P17 (86 aa).

Residues 63 to 86 are disordered; the sequence is SPAEKPDNQPELTGITFEGDNNDQ.

Homotetramer.

Its function is as follows. Assembly protein that acts late in phage assembly, after capsid protein folding and multimerization, and sorting of membrane proteins has occurred. The major coat protein P3 and two assembly factors (P10 and P17) are needed during the assembly of the virus particle inside the host cell, when the capsid protein multimers are capable of enclosing the host-derived membrane, containing the virus-encoded membrane-associated proteins. The polypeptide is Protein P17 (XVII) (Enterobacteria phage PRD1 (Bacteriophage PRD1)).